The chain runs to 175 residues: Large ribosomal subunit protein uL10 (175 aa).

The protein belongs to the universal ribosomal protein uL10 family. As to quaternary structure, part of the ribosomal stalk of the 50S ribosomal subunit. The N-terminus interacts with L11 and the large rRNA to form the base of the stalk. The C-terminus forms an elongated spine to which L12 dimers bind in a sequential fashion forming a multimeric L10(L12)X complex.

Functionally, forms part of the ribosomal stalk, playing a central role in the interaction of the ribosome with GTP-bound translation factors. This Picosynechococcus sp. (strain ATCC 27264 / PCC 7002 / PR-6) (Agmenellum quadruplicatum) protein is Large ribosomal subunit protein uL10.